A 331-amino-acid chain; its full sequence is Ferredoxin--NADP reductase (331 aa).

FAD contacts are provided by Thr-20, Glu-39, Gln-47, Tyr-52, Val-92, Phe-126, Asp-287, and Ser-328.

The protein belongs to the ferredoxin--NADP reductase type 2 family. Homodimer. Requires FAD as cofactor.

The enzyme catalyses 2 reduced [2Fe-2S]-[ferredoxin] + NADP(+) + H(+) = 2 oxidized [2Fe-2S]-[ferredoxin] + NADPH. The sequence is that of Ferredoxin--NADP reductase from Bacillus cereus (strain ZK / E33L).